A 24-amino-acid chain; its full sequence is Waglerin-3 (24 aa).

The segment covering 1–10 (SLGGKPDLRP) has biased composition (basic and acidic residues). The segment at 1-24 (SLGGKPDLRPCHPPCHYIPRPKPR) is disordered. A disulfide bridge links cysteine 11 with cysteine 15.

This sequence belongs to the waglerin family. In terms of assembly, waglerin-1 is monomeric. In terms of processing, amidation of the waglerin-1 C-terminus increases the affinity by 2-fold. Expressed by the venom gland.

It localises to the secreted. In terms of biological role, waglerin-1 selectively blocks the epsilon subunit of muscle nicotinic acetylcholine receptor (nAChR). Also has effects on rodent ionotropic GABA(A) receptors (GABR), since it potentiates I(GABA) in some neurons and depresses I(GABA) in others. In mice, it elicits tachypnea, ocular proptosis, rapid collapse and spasms, whereas no toxic effects on respiration and blood pressure are observed in rats. Functionally, waglerin-3 selectively blocks the epsilon subunit of muscle nicotinic acetylcholine receptor (nAChR). It elicits tachypnea, ocular proptosis, rapid collapse and spasms in mice. It causes death by respiratory failure. The polypeptide is Waglerin-3 (Tropidolaemus wagleri (Wagler's pit viper)).